We begin with the raw amino-acid sequence, 256 residues long: Floral homeotic protein APETALA 1 (256 aa).

The 61-residue stretch at 1 to 61 (MGRGRVQLKR…GKLFEYSTDS (61 aa)) folds into the MADS-box domain. Residues 88–178 (NTNWSMEYNR…SKQIKEREKI (91 aa)) form the K-box domain. Positions 88–185 (NTNWSMEYNR…EKILRAQQEQ (98 aa)) form a coiled coil.

Homodimer capable of binding to CArG-box sequences. Heterodimer with SEP3, AP1 and SVP. Binds AP3/PI to form a ternary complex. Interacts with the SEU-LUG corepressor complex when complexed to AGL24 or SVP. Interacts with AGL15 and AGL16. Interacts with TT16/AGL32. In terms of tissue distribution, expressed in young flower primordia, later becomes localized to sepals and petals.

The protein localises to the nucleus. Transcription factor that promotes early floral meristem identity in synergy with LEAFY. Is required subsequently for the transition of an inflorescence meristem into a floral meristem. Is indispensable for normal development of sepals and petals in flowers. Positively regulates the B class homeotic proteins APETALA3 and PISTILLATA with the cooperation of LEAFY and UFO. Interacts with SEPALLATA3 or AP3/PI heterodimer to form complexes that could be involved in genes regulation during floral meristem development. Positively regulates AGAMOUS in cooperation with LEAFY. Displays a redundant function with CAULIFLOWER in the up-regulation of LEAFY. Together with AGL24 and SVP, controls the identity of the floral meristem and regulates expression of class B, C and E genes. Represses flowering time genes AGL24, SVP and SOC1 in emerging floral meristems. This chain is Floral homeotic protein APETALA 1 (AP1), found in Arabidopsis thaliana (Mouse-ear cress).